The chain runs to 510 residues: Ent-sandaracopimaradiene 3-hydroxylase (510 aa).

The helical transmembrane segment at 4–24 (MLVAGAGAAAVAAVGGLVAAA) threads the bilayer. Cysteine 454 serves as a coordination point for heme.

It belongs to the cytochrome P450 family. As to quaternary structure, interacts with the rice dwarf virus (RDV) P2 protein. Heme serves as cofactor. Expressed in leaf blades and sheaths, stems and panicles.

It localises to the membrane. The catalysed reaction is ent-sandaracopimara-8(14),15-diene + reduced [NADPH--hemoprotein reductase] + O2 = ent-sandaracopimaradien-3beta-ol + oxidized [NADPH--hemoprotein reductase] + H2O + H(+). It catalyses the reaction 9beta-pimara-7,15-diene + reduced [NADPH--hemoprotein reductase] + O2 = 9beta-pimara-7,15-diene-3beta-ol + oxidized [NADPH--hemoprotein reductase] + H2O + H(+). Functionally, catalyzes the hydroxylation of ent-sandaracopimaradiene at the C3alpha position to produce ent-3beta-hydroxy-sandaracopimaradiene, an intermediates for the biosynthesis of oryzalexin D and oryzalexin E phytoalexins. Catalyzes the hydroxylation of ent-cassadiene at the C3alpha position to produce 3alpha-hydroxy-ent-cassadiene, which may be an intermediate for the biosynthesis of phytocassane phytoalexins. Catalyzes the hydroxylation of syn-pimaradiene (9-beta-pimara-7,15-diene) at the C3beta position to produce 3-beta-syn-pimaradiene. Can hydroxylate ent-kaurene in vitro, but the product is not ent-kauren-19-ol as expected for ent-kaurene oxidase activity. This is Ent-sandaracopimaradiene 3-hydroxylase from Oryza sativa subsp. japonica (Rice).